Reading from the N-terminus, the 646-residue chain is ATP-dependent rRNA helicase SPB4 (646 aa).

Positions 15 to 43 (WGALTPSLAPWILDYLSSMGFEQPTPVQK) match the Q motif motif. One can recognise a Helicase ATP-binding domain in the interval 46 to 247 (FDIFRGNKDV…TVGLLYPHKI (202 aa)). 59 to 66 (AVTGSGKT) contributes to the ATP binding site. The DEAD box signature appears at 195-198 (DEAD). Residues 284 to 434 (ALCQLLERLE…PLAKPPVSVT (151 aa)) form the Helicase C-terminal domain. Composition is skewed to basic and acidic residues over residues 539–548 (KKEKAAREAQ) and 566–581 (NEAWSGKHEHEDVKAA). The segment at 539 to 646 (KKEKAAREAQ…GGDEFEGFDD (108 aa)) is disordered. The stretch at 572–623 (KHEHEDVKAARREKKRRKREAQRLGDMTEPEREEQRKLDEMIAEVRRRNAEA) forms a coiled coil. A compositionally biased stretch (basic residues) spans 582–591 (RREKKRRKRE). A compositionally biased stretch (basic and acidic residues) spans 600–621 (EPEREEQRKLDEMIAEVRRRNA). The segment covering 622–631 (EAPTPAAQAA) has biased composition (low complexity).

It belongs to the DEAD box helicase family. DDX55/SPB4 subfamily. In terms of assembly, component of pre-60S ribosomal complexes.

It is found in the nucleus. The protein resides in the nucleolus. It catalyses the reaction ATP + H2O = ADP + phosphate + H(+). In terms of biological role, ATP-binding RNA helicase involved in the biogenesis of 60S ribosomal subunits. Binds 90S pre-ribosomal particles and dissociates from pre-60S ribosomal particles after processing of 27SB pre-rRNA. Required for the normal formation of 18S rRNA through the processing of pre-rRNAs at sites A0, A1 and A2, and the normal formation of 25S and 5.8S rRNAs through the processing of pre-rRNAs at sites C1 and C2. This is ATP-dependent rRNA helicase SPB4 from Chaetomium globosum (strain ATCC 6205 / CBS 148.51 / DSM 1962 / NBRC 6347 / NRRL 1970) (Soil fungus).